The chain runs to 208 residues: Large ribosomal subunit protein uL4 (208 aa).

Residues 44-79 are disordered; that stretch reads QRQGTHKSKERSEISGSTRKIGRQKGGGGARRGDMN.

Belongs to the universal ribosomal protein uL4 family. Part of the 50S ribosomal subunit.

One of the primary rRNA binding proteins, this protein initially binds near the 5'-end of the 23S rRNA. It is important during the early stages of 50S assembly. It makes multiple contacts with different domains of the 23S rRNA in the assembled 50S subunit and ribosome. Functionally, forms part of the polypeptide exit tunnel. The protein is Large ribosomal subunit protein uL4 of Bacteroides fragilis (strain YCH46).